Consider the following 974-residue polypeptide: Collagen alpha-1(I) chain (974 aa).

Low complexity predominate over residues 1–14 (GISVPGPMGPSGPR). The disordered stretch occupies residues 1 to 974 (GISVPGPMGP…PGPPGPPGPP (974 aa)). 4-hydroxyproline occurs at positions 17, 20, 23, 32, 35, 38, 53, 68, 75, and 81. Low complexity predominate over residues 25 to 44 (PQGFQGPPGEPGEPGASGPM). Over residues 56-73 (NGDDGEAGKPGRPGERRG) the composition is skewed to basic and acidic residues. Lys84 bears the 5-hydroxylysine; alternate mark. A glycan (O-linked (Gal...) hydroxylysine; alternate) is linked at Lys84. A Phosphoserine modification is found at Ser90. The segment covering 98-114 (DAGPAGPKGEPGSPGEN) has biased composition (low complexity). 4-hydroxyproline occurs at positions 108, 111, 117, 126, 132, 153, 162, 165, 192, 195, 207, 213, 222, 228, 231, and 245. A compositionally biased stretch (low complexity) spans 132–150 (PGASGPAGARGNDGATGAA). Residues 152–164 (PPGPTGPAGPPGF) are compositionally biased toward pro residues. Positions 198 to 228 (AGAAGPAGNPGADGQPGAKGANGAPGIAGAP) are enriched in low complexity. Lys248 carries the 5-hydroxylysine modification. 4-hydroxyproline occurs at positions 254, 257, 269, 278, 293, 299, 308, and 314. Residues 303–312 (GERGGPGSRG) show a composition bias toward gly residues. Lys323 carries the 5-hydroxylysine modification. 4-hydroxyproline occurs at positions 328, 337, 343, 349, 358, 361, 370, 379, 385, 397, 406, 415, 418, 436, 454, 460, 466, 472, 484, 493, 505, 520, 527, and 536. Residues 352–378 (KGLTGSPGSPGPDGKTGPPGPAGQDGR) are compositionally biased toward low complexity. A compositionally biased stretch (low complexity) spans 387–406 (ARGQAGVMGFPGPKGAAGEP). Residues 504–517 (APGNDGAKGDAGAP) show a composition bias toward low complexity. Lys548 is modified (5-hydroxylysine). 4-hydroxyproline is present on residues Pro554, Pro569, and Pro575. The span at 581-595 (SGPSGPAGPTGARGA) shows a compositional bias: low complexity. Position 584 is a phosphoserine (Ser584). A 4-hydroxyproline mark is found at Pro596, Pro602, Pro605, Pro614, Pro620, Pro638, Pro647, and Pro656. Over residues 608–635 (AGFAGPPGADGQPGAKGEPGDAGAKGDA) the composition is skewed to low complexity. A compositionally biased stretch (pro residues) spans 637–649 (PPGPAGPTGPPGP). At Lys659 the chain carries 5-hydroxylysine. Residues 664 to 680 (SAGPPGATGFPGAAGRV) show a composition bias toward low complexity. 4-hydroxyproline occurs at positions 668 and 674. A 3-hydroxyproline modification is found at Pro682. 4-hydroxyproline is present on residues Pro683, Pro692, Pro695, Pro716, Pro725, Pro733, Pro742, Pro760, Pro769, Pro772, Pro778, Pro793, Pro799, Pro805, Pro814, and Pro820. Residues 709–718 (ETGPAGRPGE) show a composition bias toward low complexity. The span at 730–742 (KGSPGADGPAGAP) shows a compositional bias: low complexity. Residues 792-802 (PPGPVGPPGLA) are compositionally biased toward pro residues. The span at 804–826 (PPGESGREGSPGAEGSPGRDGSP) shows a compositional bias: low complexity. The span at 828–844 (PKGPPGAPGAPGAPGPV) shows a compositional bias: pro residues. Lys829 carries the post-translational modification 5-hydroxylysine. 3 positions are modified to 4-hydroxyproline: Pro832, Pro835, and Pro838. Residues 865-879 (AGPAGARGPAGPQGP) show a composition bias toward low complexity. Basic and acidic residues predominate over residues 880–894 (RGDKGETGEQGDRRG). A 5-hydroxylysine modification is found at Lys883. 4 positions are modified to 4-hydroxyproline: Pro905, Pro908, Pro926, and Pro941. A compositionally biased stretch (low complexity) spans 908–941 (PGEQGPSGASGPAGPRGPPGSAGSPGKDGLNGLP). Pro946 carries the post-translational modification 3-hydroxyproline. Pro947 is subject to 4-hydroxyproline. A compositionally biased stretch (pro residues) spans 959-974 (VGPPGPPGPPGPPGPP). A 3-hydroxyproline modification is found at Pro961. Pro962 is subject to 4-hydroxyproline. Pro964 carries the post-translational modification 3-hydroxyproline. Pro965 is subject to 4-hydroxyproline. Residue Pro967 is modified to 3-hydroxyproline. Pro968, Pro971, and Pro974 each carry 4-hydroxyproline.

This sequence belongs to the fibrillar collagen family. In terms of assembly, trimers of one alpha 2(I) and two alpha 1(I) chains. In terms of processing, contains mostly 4-hydroxyproline. Proline residues at the third position of the tripeptide repeating unit (G-X-Y) are hydroxylated in some or all of the chains. Contains 3-hydroxyproline at a few sites. This modification occurs on the first proline residue in the sequence motif Gly-Pro-Hyp, where Hyp is 4-hydroxyproline. Post-translationally, lysine residues at the third position of the tripeptide repeating unit (G-X-Y) are 5-hydroxylated in some or all of the chains. In terms of processing, O-glycosylated on hydroxylated lysine residues. The O-linked glycan consists of a Glc-Gal disaccharide. As to expression, expressed in bones.

Its subcellular location is the secreted. It localises to the extracellular space. The protein resides in the extracellular matrix. Functionally, type I collagen is a member of group I collagen (fibrillar forming collagen). This chain is Collagen alpha-1(I) chain, found in Scelidodon sp. (strain SLP-2019) (South American ground sloth).